A 356-amino-acid chain; its full sequence is Protein pelota homolog (356 aa).

It belongs to the eukaryotic release factor 1 family. Pelota subfamily. In terms of assembly, monomer. Requires a divalent metal cation as cofactor.

Its subcellular location is the cytoplasm. May function in recognizing stalled ribosomes, interact with stem-loop structures in stalled mRNA molecules, and effect endonucleolytic cleavage of the mRNA. May play a role in the release non-functional ribosomes and degradation of damaged mRNAs. Has endoribonuclease activity. This Desulfurococcus amylolyticus (strain DSM 18924 / JCM 16383 / VKM B-2413 / 1221n) (Desulfurococcus kamchatkensis) protein is Protein pelota homolog.